Reading from the N-terminus, the 270-residue chain is Thiosulfate dehydrogenase (270 aa).

A signal peptide spans 1–27; the sequence is MRGDVRVHTASPIAAAWLLAVGLVAHA. 2 Cytochrome c domains span residues 44–158 and 174–260; these read PDGA…PVGA and PDGV…LTHP. Heme c contacts are provided by Cys-76, Cys-79, His-80, Cys-187, Cys-190, and His-191.

In terms of assembly, monomer. Binds 2 heme c groups covalently per subunit.

It is found in the periplasm. It catalyses the reaction 2 thiosulfate + 2 Fe(III)-[cytochrome c] = tetrathionate + 2 Fe(II)-[cytochrome c] + 2 H(+). In terms of biological role, catalyzes the oxidation of 2 molecules of thiosulfate to tetrathionate. In Allochromatium vinosum (strain ATCC 17899 / DSM 180 / NBRC 103801 / NCIMB 10441 / D) (Chromatium vinosum), this protein is Thiosulfate dehydrogenase (tsdA).